The chain runs to 179 residues: UPF0302 protein BPUM_1989 (179 aa).

The protein belongs to the UPF0302 family.

The sequence is that of UPF0302 protein BPUM_1989 from Bacillus pumilus (strain SAFR-032).